A 204-amino-acid chain; its full sequence is Large ribosomal subunit protein bL25 (204 aa).

It belongs to the bacterial ribosomal protein bL25 family. CTC subfamily. As to quaternary structure, part of the 50S ribosomal subunit; part of the 5S rRNA/L5/L18/L25 subcomplex. Contacts the 5S rRNA. Binds to the 5S rRNA independently of L5 and L18.

In terms of biological role, this is one of the proteins that binds to the 5S RNA in the ribosome where it forms part of the central protuberance. This is Large ribosomal subunit protein bL25 from Burkholderia mallei (strain NCTC 10247).